Here is a 332-residue protein sequence, read N- to C-terminus: Protein pelota homolog (332 aa).

It belongs to the eukaryotic release factor 1 family. Pelota subfamily. As to quaternary structure, monomer. A divalent metal cation serves as cofactor.

It localises to the cytoplasm. May function in recognizing stalled ribosomes, interact with stem-loop structures in stalled mRNA molecules, and effect endonucleolytic cleavage of the mRNA. May play a role in the release non-functional ribosomes and degradation of damaged mRNAs. Has endoribonuclease activity. This chain is Protein pelota homolog, found in Pyrobaculum calidifontis (strain DSM 21063 / JCM 11548 / VA1).